A 500-amino-acid polypeptide reads, in one-letter code: Probable glycine dehydrogenase (decarboxylating) subunit 2 (500 aa).

At Lys273 the chain carries N6-(pyridoxal phosphate)lysine.

It belongs to the GcvP family. C-terminal subunit subfamily. As to quaternary structure, the glycine cleavage system is composed of four proteins: P, T, L and H. In this organism, the P 'protein' is a heterodimer of two subunits. The cofactor is pyridoxal 5'-phosphate.

It carries out the reaction N(6)-[(R)-lipoyl]-L-lysyl-[glycine-cleavage complex H protein] + glycine + H(+) = N(6)-[(R)-S(8)-aminomethyldihydrolipoyl]-L-lysyl-[glycine-cleavage complex H protein] + CO2. The glycine cleavage system catalyzes the degradation of glycine. The P protein binds the alpha-amino group of glycine through its pyridoxal phosphate cofactor; CO(2) is released and the remaining methylamine moiety is then transferred to the lipoamide cofactor of the H protein. The polypeptide is Probable glycine dehydrogenase (decarboxylating) subunit 2 (Rhodopirellula baltica (strain DSM 10527 / NCIMB 13988 / SH1)).